We begin with the raw amino-acid sequence, 47 residues long: Large ribosomal subunit protein bL34 (47 aa).

2 stretches are compositionally biased toward basic residues: residues 1–22 (MAKG…HGFR) and 36–47 (ARRRKGRKSLTA). Positions 1-47 (MAKGKRTFQPNNRRRSRVHGFRSRMSTRAGRAIVSARRRKGRKSLTA) are disordered.

The protein belongs to the bacterial ribosomal protein bL34 family.

This chain is Large ribosomal subunit protein bL34, found in Corynebacterium kroppenstedtii (strain DSM 44385 / JCM 11950 / CIP 105744 / CCUG 35717).